A 734-amino-acid polypeptide reads, in one-letter code: 1,4-alpha-glucan branching enzyme GlgB (734 aa).

D414 (nucleophile) is an active-site residue. The active-site Proton donor is E467.

It belongs to the glycosyl hydrolase 13 family. GlgB subfamily. Monomer.

The catalysed reaction is Transfers a segment of a (1-&gt;4)-alpha-D-glucan chain to a primary hydroxy group in a similar glucan chain.. The protein operates within glycan biosynthesis; glycogen biosynthesis. In terms of biological role, catalyzes the formation of the alpha-1,6-glucosidic linkages in glycogen by scission of a 1,4-alpha-linked oligosaccharide from growing alpha-1,4-glucan chains and the subsequent attachment of the oligosaccharide to the alpha-1,6 position. The protein is 1,4-alpha-glucan branching enzyme GlgB of Myxococcus xanthus (strain DK1622).